A 484-amino-acid chain; its full sequence is Schwannomin-interacting protein 1 (484 aa).

The segment covering 1 to 28 (MERSEQRVRAAWDCDPGKQADRDYREDG) has biased composition (basic and acidic residues). 4 disordered regions span residues 1 to 74 (MERS…VSAL), 86 to 220 (KKVI…PPMD), 232 to 258 (QFRE…ERES), and 305 to 350 (SGSD…ESLD). The span at 33 to 67 (SDAGSSSSSRASSQSNSTKVTPCSECKSSSSPGGS) shows a compositional bias: low complexity. Residues 92-106 (WAPEEDGEEEEEEDD) are compositionally biased toward acidic residues. Residues 107–120 (RGYRDDGCPAREPG) are compositionally biased toward basic and acidic residues. Residues 123 to 137 (SARIGSSGSGSRSAA) show a composition bias toward low complexity. Residues 150 to 159 (HPHDPQDLRH) are compositionally biased toward basic and acidic residues. Polar residues predominate over residues 239–252 (RNQGQARTNSTSAQ). Residues 306 to 320 (GSDKDSDADDSKTET) are compositionally biased toward basic and acidic residues. Positions 321-332 (SLDTPLSPMSKQ) are enriched in polar residues. Acidic residues predominate over residues 341–350 (TTEEESESLD). Residues 421 to 455 (IGQLQVIVNDLHSQIESLNEELVQLLLIRDELHTE) are a coiled coil.

This sequence belongs to the SCHIP1 family. Homooligomer (via coiled coil domain). Interacts with NF2; the interaction is direct. Interacts with ANK3.

The polypeptide is Schwannomin-interacting protein 1 (Mus musculus (Mouse)).